We begin with the raw amino-acid sequence, 540 residues long: Light-independent protochlorophyllide reductase subunit B (540 aa).

Residue Asp36 coordinates [4Fe-4S] cluster. Asp287 functions as the Proton donor in the catalytic mechanism. Gly422–Leu423 contributes to the substrate binding site.

It belongs to the ChlB/BchB/BchZ family. As to quaternary structure, protochlorophyllide reductase is composed of three subunits; BchL, BchN and BchB. Forms a heterotetramer of two BchB and two BchN subunits. It depends on [4Fe-4S] cluster as a cofactor.

The catalysed reaction is chlorophyllide a + oxidized 2[4Fe-4S]-[ferredoxin] + 2 ADP + 2 phosphate = protochlorophyllide a + reduced 2[4Fe-4S]-[ferredoxin] + 2 ATP + 2 H2O. Its pathway is porphyrin-containing compound metabolism; bacteriochlorophyll biosynthesis (light-independent). Functionally, component of the dark-operative protochlorophyllide reductase (DPOR) that uses Mg-ATP and reduced ferredoxin to reduce ring D of protochlorophyllide (Pchlide) to form chlorophyllide a (Chlide). This reaction is light-independent. The NB-protein (BchN-BchB) is the catalytic component of the complex. The polypeptide is Light-independent protochlorophyllide reductase subunit B (Rhodopseudomonas palustris (strain TIE-1)).